Here is a 300-residue protein sequence, read N- to C-terminus: Small ribosomal subunit protein uS2 (300 aa).

A disordered region spans residues 269–300; the sequence is WEADGADWAASSAAAPAESWAAEAQGAEGAKW.

It belongs to the universal ribosomal protein uS2 family. In terms of assembly, component of the small ribosomal subunit. Mature ribosomes consist of a small (40S) and a large (60S) subunit. The 40S subunit contains about 33 different proteins and 1 molecule of RNA (18S). The 60S subunit contains about 49 different proteins and 3 molecules of RNA (25S, 5.8S and 5S). Interacts with rps21.

Its subcellular location is the cytoplasm. Its function is as follows. Required for the assembly and/or stability of the 40S ribosomal subunit. Required for the processing of the 20S rRNA-precursor to mature 18S rRNA in a late step of the maturation of 40S ribosomal subunits. This Aspergillus terreus (strain NIH 2624 / FGSC A1156) protein is Small ribosomal subunit protein uS2 (rps0).